Reading from the N-terminus, the 947-residue chain is Bifunctional glutamine synthetase adenylyltransferase/adenylyl-removing enzyme (947 aa).

Positions 1–440 (MTPLSSPLSQ…VFNELIGDDE (440 aa)) are adenylyl removase. Residues 450 to 947 (SEPWREVWQD…ASWRKWLVAV (498 aa)) form an adenylyl transferase region.

It belongs to the GlnE family. The cofactor is Mg(2+).

The catalysed reaction is [glutamine synthetase]-O(4)-(5'-adenylyl)-L-tyrosine + phosphate = [glutamine synthetase]-L-tyrosine + ADP. It carries out the reaction [glutamine synthetase]-L-tyrosine + ATP = [glutamine synthetase]-O(4)-(5'-adenylyl)-L-tyrosine + diphosphate. Functionally, involved in the regulation of glutamine synthetase GlnA, a key enzyme in the process to assimilate ammonia. When cellular nitrogen levels are high, the C-terminal adenylyl transferase (AT) inactivates GlnA by covalent transfer of an adenylyl group from ATP to specific tyrosine residue of GlnA, thus reducing its activity. Conversely, when nitrogen levels are low, the N-terminal adenylyl removase (AR) activates GlnA by removing the adenylyl group by phosphorolysis, increasing its activity. The regulatory region of GlnE binds the signal transduction protein PII (GlnB) which indicates the nitrogen status of the cell. In Salmonella heidelberg (strain SL476), this protein is Bifunctional glutamine synthetase adenylyltransferase/adenylyl-removing enzyme.